Here is a 231-residue protein sequence, read N- to C-terminus: ABC transporter ATP-binding protein YtrE (231 aa).

One can recognise an ABC transporter domain in the interval 4–231 (VQHIDHSFTI…VLKGGITVEV (228 aa)). An ATP-binding site is contributed by 42-49 (GRSGSGKS).

This sequence belongs to the ABC transporter superfamily. In terms of assembly, the complex is composed of 2 ATP-binding proteins (YtrB and YtrE), 2 transmembrane proteins (YtrC and YtrD) and a solute-binding protein (YtrF).

Its subcellular location is the cell membrane. Its function is as follows. Part of the ABC transporter complex YtrBCDEF that plays a role in acetoin utilization during stationary phase and sporulation. This Bacillus subtilis (strain 168) protein is ABC transporter ATP-binding protein YtrE (ytrE).